The following is a 477-amino-acid chain: Glycogen synthase (477 aa).

Lys-15 serves as a coordination point for ADP-alpha-D-glucose.

This sequence belongs to the glycosyltransferase 1 family. Bacterial/plant glycogen synthase subfamily.

The catalysed reaction is [(1-&gt;4)-alpha-D-glucosyl](n) + ADP-alpha-D-glucose = [(1-&gt;4)-alpha-D-glucosyl](n+1) + ADP + H(+). Its pathway is glycan biosynthesis; glycogen biosynthesis. Synthesizes alpha-1,4-glucan chains using ADP-glucose. The protein is Glycogen synthase of Streptococcus pneumoniae (strain 70585).